We begin with the raw amino-acid sequence, 173 residues long: MTNDSEIVVEEKISGPISDWLSNKGFENIPLKEDHLGIEVIKISPNNLLSIVEALKNDGFNYLQCQGGYDEGPGLNIVCFYNLIEMNELKEDISPREVRLKVFLDRNGDLTVPSLYSLFRGADWQERETFDMYGVNFKGHPHPKRLLMPEDWKGWPLRKDYVQPDFYEMQDAY.

It belongs to the complex I 30 kDa subunit family. As to quaternary structure, NDH-1 can be composed of about 15 different subunits; different subcomplexes with different compositions have been identified which probably have different functions.

It localises to the cellular thylakoid membrane. It catalyses the reaction a plastoquinone + NADH + (n+1) H(+)(in) = a plastoquinol + NAD(+) + n H(+)(out). The enzyme catalyses a plastoquinone + NADPH + (n+1) H(+)(in) = a plastoquinol + NADP(+) + n H(+)(out). NDH-1 shuttles electrons from an unknown electron donor, via FMN and iron-sulfur (Fe-S) centers, to quinones in the respiratory and/or the photosynthetic chain. The immediate electron acceptor for the enzyme in this species is believed to be plastoquinone. Couples the redox reaction to proton translocation, and thus conserves the redox energy in a proton gradient. Cyanobacterial NDH-1 also plays a role in inorganic carbon-concentration. The chain is NAD(P)H-quinone oxidoreductase subunit J from Prochlorococcus marinus (strain NATL1A).